The following is a 486-amino-acid chain: Malonate-semialdehyde dehydrogenase (486 aa).

NAD(+) is bound by residues phenylalanine 154, lysine 178, glutamate 181, arginine 182, and serine 231. The active-site Nucleophile is cysteine 286. Glutamate 386 serves as a coordination point for NAD(+).

The protein belongs to the aldehyde dehydrogenase family. IolA subfamily. Homotetramer.

The enzyme catalyses 3-oxopropanoate + NAD(+) + CoA + H2O = hydrogencarbonate + acetyl-CoA + NADH + H(+). The catalysed reaction is 2-methyl-3-oxopropanoate + NAD(+) + CoA + H2O = propanoyl-CoA + hydrogencarbonate + NADH + H(+). Its pathway is polyol metabolism; myo-inositol degradation into acetyl-CoA; acetyl-CoA from myo-inositol: step 7/7. In terms of biological role, catalyzes the oxidation of malonate semialdehyde (MSA) and methylmalonate semialdehyde (MMSA) into acetyl-CoA and propanoyl-CoA, respectively. Is involved in a myo-inositol catabolic pathway. Bicarbonate, and not CO2, is the end-product of the enzymatic reaction. In Bacillus cereus (strain B4264), this protein is Malonate-semialdehyde dehydrogenase.